A 593-amino-acid polypeptide reads, in one-letter code: Methylenetetrahydrofolate reductase (NADH) 1 (593 aa).

The active-site Proton donor/acceptor is E21. NAD(+)-binding positions include 21–26 (EYFPPK) and 52–53 (TW). FAD is bound by residues 52 to 53 (TW), H81, 111 to 113 (RGD), Y153, 157 to 160 (HPDA), D175, and K182. D113 is a substrate binding site. Substrate-binding residues include Q193 and Y285.

Belongs to the methylenetetrahydrofolate reductase family. In terms of assembly, homodimer. FAD is required as a cofactor.

It carries out the reaction (6S)-5-methyl-5,6,7,8-tetrahydrofolate + NAD(+) = (6R)-5,10-methylene-5,6,7,8-tetrahydrofolate + NADH + H(+). Its pathway is one-carbon metabolism; tetrahydrofolate interconversion. Its activity is regulated as follows. Plant MTHFRs strongly prefer NADH over NADPH. Not inhibited by methionine or S-adenosylmethionine. In terms of biological role, the probable reversibility of the MTHFR reaction in plants suggests that they can metabolize the methyl group of 5,10-methylenetetrahydrofolate to serine, sugars and starch. This chain is Methylenetetrahydrofolate reductase (NADH) 1, found in Zea mays (Maize).